A 423-amino-acid polypeptide reads, in one-letter code: Histidine--tRNA ligase 2 (423 aa).

It belongs to the class-II aminoacyl-tRNA synthetase family. As to quaternary structure, homodimer.

It is found in the cytoplasm. The catalysed reaction is tRNA(His) + L-histidine + ATP = L-histidyl-tRNA(His) + AMP + diphosphate + H(+). This is Histidine--tRNA ligase 2 from Bacillus anthracis.